The primary structure comprises 361 residues: Probable dual-specificity RNA methyltransferase RlmN (361 aa).

Glu99 serves as the catalytic Proton acceptor. The Radical SAM core domain maps to 105-342 (GPNRMTACVS…VTIRKSYGTP (238 aa)). A disulfide bond links Cys112 and Cys347. [4Fe-4S] cluster is bound by residues Cys119, Cys123, and Cys126. Residues 171–172 (GE), Ser204, 227–229 (SLH), and Asn304 contribute to the S-adenosyl-L-methionine site. Cys347 (S-methylcysteine intermediate) is an active-site residue.

It belongs to the radical SAM superfamily. RlmN family. It depends on [4Fe-4S] cluster as a cofactor.

The protein resides in the cytoplasm. The catalysed reaction is adenosine(2503) in 23S rRNA + 2 reduced [2Fe-2S]-[ferredoxin] + 2 S-adenosyl-L-methionine = 2-methyladenosine(2503) in 23S rRNA + 5'-deoxyadenosine + L-methionine + 2 oxidized [2Fe-2S]-[ferredoxin] + S-adenosyl-L-homocysteine. The enzyme catalyses adenosine(37) in tRNA + 2 reduced [2Fe-2S]-[ferredoxin] + 2 S-adenosyl-L-methionine = 2-methyladenosine(37) in tRNA + 5'-deoxyadenosine + L-methionine + 2 oxidized [2Fe-2S]-[ferredoxin] + S-adenosyl-L-homocysteine. Functionally, specifically methylates position 2 of adenine 2503 in 23S rRNA and position 2 of adenine 37 in tRNAs. The sequence is that of Probable dual-specificity RNA methyltransferase RlmN from Chlorobium luteolum (strain DSM 273 / BCRC 81028 / 2530) (Pelodictyon luteolum).